The primary structure comprises 575 residues: MYFEIEKQAIDAISDALDKFEVDNTLENFQVEDEKNFRLEFPPNPDMGDLASTIAFSLAKKLRKAPNLIASEIVEKLEIPEIFEKVEAIGPYVNFFIDYSNFSKKLLEYVGKDYGHLPKADEKIILEHTSANPNGPLHIGHVRNSIFGDSLNRLLKVAGREVETQYYVNDMGRQIAIIVFGITELGLKIEDQEGDKIDHKIGRLYFKANQKLNEDESLVSHVDNLIERYEGGAEPELNKIFEEVVESCLLGIKETLHRININHDDFVWEGQFVRSGEVDDMIKYFDHEGFVSYGDVTYIDLTCFQIEKEFVLRRSDGTSLYSTRDLAYHRYKATQGDVVLDILGSDHKLAAQQINVIFKEILREIPPEVIFYEFITLPSGSMSTRKGVFVSVDELVDEAVKRAADEIKSRNPDLTDEEIKPMAEDIGVGAIRFFIAKLSPEKHLTFKWDEALSFERGCASIQYAHARACKLLKKSGKDVSSLAVSDDWVPNENEKDLIRTIAKFPQVIEDCANKKRIHNITQYCQDLAGAFNKFYKAEQVIGSDVEDTRLVLVDRAKTTLKNALDILGVPAPQKM.

The short motif at alanine 131–histidine 141 is the 'HIGH' region element.

The protein belongs to the class-I aminoacyl-tRNA synthetase family.

It is found in the cytoplasm. The enzyme catalyses tRNA(Arg) + L-arginine + ATP = L-arginyl-tRNA(Arg) + AMP + diphosphate. In Methanobrevibacter smithii (strain ATCC 35061 / DSM 861 / OCM 144 / PS), this protein is Arginine--tRNA ligase.